Consider the following 425-residue polypeptide: Enolase (425 aa).

Residue Gln162 coordinates (2R)-2-phosphoglycerate. Glu204 (proton donor) is an active-site residue. Mg(2+) is bound by residues Asp241, Glu284, and Asp311. The (2R)-2-phosphoglycerate site is built by Lys336, Arg365, Ser366, and Lys387. Residue Lys336 is the Proton acceptor of the active site.

It belongs to the enolase family. Requires Mg(2+) as cofactor.

It is found in the cytoplasm. Its subcellular location is the secreted. The protein localises to the cell surface. The catalysed reaction is (2R)-2-phosphoglycerate = phosphoenolpyruvate + H2O. It participates in carbohydrate degradation; glycolysis; pyruvate from D-glyceraldehyde 3-phosphate: step 4/5. Functionally, catalyzes the reversible conversion of 2-phosphoglycerate (2-PG) into phosphoenolpyruvate (PEP). It is essential for the degradation of carbohydrates via glycolysis. This is Enolase from Brucella abortus (strain S19).